The primary structure comprises 404 residues: Cysteine desulfurase IscS (404 aa).

Residues 75-76 (AT), Asn155, Gln183, and 203-205 (SAH) each bind pyridoxal 5'-phosphate. Residue Lys206 is modified to N6-(pyridoxal phosphate)lysine. Thr243 contacts pyridoxal 5'-phosphate. The Cysteine persulfide intermediate role is filled by Cys328. Cys328 serves as a coordination point for [2Fe-2S] cluster.

It belongs to the class-V pyridoxal-phosphate-dependent aminotransferase family. NifS/IscS subfamily. In terms of assembly, homodimer. Forms a heterotetramer with IscU, interacts with other sulfur acceptors. Pyridoxal 5'-phosphate serves as cofactor.

It localises to the cytoplasm. The catalysed reaction is (sulfur carrier)-H + L-cysteine = (sulfur carrier)-SH + L-alanine. It participates in cofactor biosynthesis; iron-sulfur cluster biosynthesis. Functionally, master enzyme that delivers sulfur to a number of partners involved in Fe-S cluster assembly, tRNA modification or cofactor biosynthesis. Catalyzes the removal of elemental sulfur atoms from cysteine to produce alanine. Functions as a sulfur delivery protein for Fe-S cluster synthesis onto IscU, an Fe-S scaffold assembly protein, as well as other S acceptor proteins. The sequence is that of Cysteine desulfurase IscS from Ectopseudomonas mendocina (strain ymp) (Pseudomonas mendocina).